The primary structure comprises 389 residues: Major outer membrane porin (389 aa).

The signal sequence occupies residues 1–22; sequence MKKLLKSALLFAATGSALSLQA.

Belongs to the chlamydial porin (CP) (TC 1.B.2) family. In terms of assembly, part of a disulfide cross-linked outer membrane complex (COMC) composed of the major outer membrane porin (MOMP), the small cysteine-rich protein (OmcA) and the large cysteine-rich periplasmic protein (OmcB).

It is found in the cell outer membrane. Functionally, in elementary bodies (EBs, the infectious stage, which is able to survive outside the host cell) provides the structural integrity of the outer envelope through disulfide cross-links with the small cysteine-rich protein and the large cysteine-rich periplasmic protein. It has been described in publications as the Sarkosyl-insoluble COMC (Chlamydia outer membrane complex), and serves as the functional equivalent of peptidoglycan. Its function is as follows. Permits diffusion of specific solutes through the outer membrane. This Chlamydia abortus (strain DSM 27085 / S26/3) (Chlamydophila abortus) protein is Major outer membrane porin (ompA).